Reading from the N-terminus, the 61-residue chain is Photosystem II reaction center protein K (61 aa).

A propeptide spanning residues 1-24 (MLNIFSLICICLNSALHSSSFFFA) is cleaved from the precursor. A helical membrane pass occupies residues 32–52 (FFNPIVDFMPVIPVLFFLLAL).

The protein belongs to the PsbK family. As to quaternary structure, PSII is composed of 1 copy each of membrane proteins PsbA, PsbB, PsbC, PsbD, PsbE, PsbF, PsbH, PsbI, PsbJ, PsbK, PsbL, PsbM, PsbT, PsbX, PsbY, PsbZ, Psb30/Ycf12, at least 3 peripheral proteins of the oxygen-evolving complex and a large number of cofactors. It forms dimeric complexes.

Its subcellular location is the plastid. It is found in the chloroplast thylakoid membrane. One of the components of the core complex of photosystem II (PSII). PSII is a light-driven water:plastoquinone oxidoreductase that uses light energy to abstract electrons from H(2)O, generating O(2) and a proton gradient subsequently used for ATP formation. It consists of a core antenna complex that captures photons, and an electron transfer chain that converts photonic excitation into a charge separation. In Drimys granadensis, this protein is Photosystem II reaction center protein K.